The sequence spans 70 residues: Toxin Boma6d (70 aa).

An LCN-type CS-alpha/beta domain is found at 2-68 (RDAYIAQNYN…VPIKVEGKCH (67 aa)). 4 disulfide bridges follow: Cys-12/Cys-67, Cys-16/Cys-40, Cys-22/Cys-50, and Cys-26/Cys-52.

The protein belongs to the long (4 C-C) scorpion toxin superfamily. Sodium channel inhibitor family. Alpha subfamily. In terms of tissue distribution, expressed by the venom gland.

Its subcellular location is the secreted. Alpha toxins bind voltage-independently at site-3 of sodium channels (Nav) and inhibit the inactivation of the activated channels, thereby blocking neuronal transmission. This is Toxin Boma6d from Buthus occitanus mardochei (Moroccan scorpion).